Consider the following 684-residue polypeptide: Phenoloxidase 2 (684 aa).

Residues 1–50 (MADKKNLLLLFDHPTEPVFMDKGKRVTVFDVPDSFLTDRYRPISNEVQSR) constitute a propeptide that is removed on maturation. Residues His208, His212, and His238 each coordinate Cu cation. Catalysis depends on Glu350, which acts as the Proton acceptor. Residues His365, His369, and His405 each contribute to the Cu cation site. Asn448 and Asn492 each carry an N-linked (GlcNAc...) asparagine glycan. 2 disulfides stabilise this stretch: Cys581/Cys623 and Cys583/Cys630. Residues Asn665 and Asn677 are each glycosylated (N-linked (GlcNAc...) asparagine).

It belongs to the tyrosinase family. Cu(2+) is required as a cofactor. Upon activation, a trypsin type protease cleaves prophenol oxidase to yield the active enzyme.

Its subcellular location is the secreted. The catalysed reaction is 2 L-dopa + O2 = 2 L-dopaquinone + 2 H2O. It catalyses the reaction L-tyrosine + O2 = L-dopaquinone + H2O. Its function is as follows. This is a copper-containing oxidase that functions in the formation of pigments such as melanins and other polyphenolic compounds. Catalyzes the rate-limiting conversions of tyrosine to DOPA, DOPA to DOPA-quinone and possibly 5,6 dihydroxyindole to indole-5'6 quinonee. The sequence is that of Phenoloxidase 2 (PPO2) from Drosophila melanogaster (Fruit fly).